Consider the following 261-residue polypeptide: 3beta-hydroxysteroid dehydrogenase 1 (261 aa).

NAD(+) contacts are provided by residues 65-66 (DV), Asn-92, Tyr-158, and Lys-162. Tyr-158 acts as the Proton acceptor in catalysis.

It belongs to the short-chain dehydrogenases/reductases (SDR) family.

It catalyses the reaction 3-oxo-5beta-cholan-24-oate + NADH + H(+) = isolithocholate + NAD(+). The enzyme catalyses 12alpha-hydroxy-3-oxo-5beta-cholan-24-oate + NADH + H(+) = isodeoxycholate + NAD(+). It carries out the reaction 7alpha,12alpha-dihydroxy-3-oxo-5beta-cholan-24-oate + NADH + H(+) = isocholate + NAD(+). The catalysed reaction is 3-oxochenodeoxycholate + NADH + H(+) = isochenodeoxycholate + NAD(+). In terms of biological role, involved in the modification of secondary bile acids into iso-bile acids (3beta-bile acids) via epimerization of the 3-OH group through a 3-oxo-intermediate. Catalyzes the reduction of 12-alpha-hydroxy-3-oxo-5-beta-cholan-24-oate (3-oxo-DCA) and 3-oxo-5-beta-cholan-24-oate (3-oxo-LCA) to yield isodeoxycholate (isoDCA) and isolithocholate (isoLCA), respectively. Is also able to catalyze the reduction of 3-dehydrocholate (3-oxo-CA or 7alpha,12alpha-dihydroxy-3-oxo-5beta-cholan-24-oate) and 7-alpha-hydroxy-3-oxo-5-beta-cholan-24-oate (3-oxo-CDCA), into isocholate (isoCA) and isochenodeoxycholate (isoCDCA), respectively. Prefers NADH to NADPH as cosubstrate. The conversion of the abundant bile acid deoxycholate (DCA) into isoDCA by the gut bacterium E.lenta favors the growth of the keystone commensal genus Bacteroides, since isoDCA is less cytotoxic than its parent compound, DCA; iso-bile acids have thus a potential role in modulating gut community composition. This is 3beta-hydroxysteroid dehydrogenase 1 from Eggerthella lenta (strain ATCC 25559 / DSM 2243 / CCUG 17323 / JCM 9979 / KCTC 3265 / NCTC 11813 / VPI 0255 / 1899 B) (Eubacterium lentum).